Consider the following 398-residue polypeptide: Alpha-ketoglutarate-dependent dioxygenase bsc9 (398 aa).

Positions 167 and 169 each coordinate Fe cation. Threonine 212 serves as a coordination point for 2-oxoglutarate. Histidine 365 contributes to the Fe cation binding site. Arginine 377 lines the 2-oxoglutarate pocket.

Belongs to the TfdA dioxygenase family. The cofactor is Fe(2+).

It participates in mycotoxin biosynthesis. In terms of biological role, alpha-ketoglutarate dependent dioxygenase; part of the gene cluster that mediates the biosynthesis of the diterpene glucoside brassicicene C. In the first step of the brassicicene C biosynthesis, the bifunctional diterpene synthase bsc8 that possesses both prenyl transferase and terpene cyclase activity, converts isopentenyl diphosphate and dimethylallyl diphosphate into geranylgeranyl diphosphate (GGDP) that is further converted into fusicocca-2,10(14)-diene, the first precursor for brassicicene C. Fusicocca-2,10(14)-diene is then substrate of cytochrome P450 monooxygenase bsc1 for hydroxylation at the C-8 position. Oxidation at C-16 position to aldehyde is then catalyzed by the cytochrome P450 monooyxygenase bsc7, yielding fusicocca-2,10(14)-diene-8-beta,16-diol. Follows the isomerization of the double bond and reduction of aldehyde to alcohol catalyzed by the short-chain dehydrogenase/reductase bsc3 to yield the diol compound fusicocca-1,10(14)-diene-8 beta,16-diol. The next step is the oxidation at the C-3 position of fusicocca-2,10(14)-diene-8-beta,16-diol catalyzed by the alpha-ketoglutarate dependent dioxygenase bsc9, to produce a triol compound. Methylation of the hydroxy group at position 16 is performed by the methyltransferase bsc6. 16-O-methylation is followed by oxidation at the C-13 position to ketone and an alkyl shift of the methyl group leads to brassicicene C. Although the probable acetyltransferase bsc4 is included in the gene cluster, no acetylation reactions are necessary for brassicicene C biosynthesis. However, the fact that brassicicene E, which is a structurally related compound having an acetoxy group at position 12, was previously isolated from another strain of A.brassicicola suggests that the ATCC 96836 strain might also produce a small amount of brassicicene E. In Alternaria brassicicola (Dark leaf spot agent), this protein is Alpha-ketoglutarate-dependent dioxygenase bsc9.